Reading from the N-terminus, the 554-residue chain is 3-(3-hydroxy-phenyl)propionate/3-hydroxycinnamic acid hydroxylase (554 aa).

FAD contacts are provided by residues 17–46 and 285–295; these read QVAIAGAGPVGLMMANYLGQMGIDVLVVEK and FRIDRVLLAGD.

The protein belongs to the PheA/TfdB FAD monooxygenase family. It depends on FAD as a cofactor.

The enzyme catalyses 3-(3-hydroxyphenyl)propanoate + NADH + O2 + H(+) = 3-(2,3-dihydroxyphenyl)propanoate + NAD(+) + H2O. It carries out the reaction (2E)-3-(3-hydroxyphenyl)prop-2-enoate + NADH + O2 + H(+) = (2E)-3-(2,3-dihydroxyphenyl)prop-2-enoate + NAD(+) + H2O. The protein operates within aromatic compound metabolism; 3-phenylpropanoate degradation. Its function is as follows. Catalyzes the insertion of one atom of molecular oxygen into position 2 of the phenyl ring of 3-(3-hydroxyphenyl)propionate (3-HPP) and hydroxycinnamic acid (3HCI). The chain is 3-(3-hydroxy-phenyl)propionate/3-hydroxycinnamic acid hydroxylase from Escherichia coli O8 (strain IAI1).